The sequence spans 150 residues: Large ribosomal subunit protein bL9 (150 aa).

This sequence belongs to the bacterial ribosomal protein bL9 family.

Its function is as follows. Binds to the 23S rRNA. The sequence is that of Large ribosomal subunit protein bL9 from Mycoplasma genitalium (strain ATCC 33530 / DSM 19775 / NCTC 10195 / G37) (Mycoplasmoides genitalium).